Consider the following 134-residue polypeptide: Complexin-1 (134 aa).

Disordered regions lie at residues 1 to 60 and 74 to 114; these read MEFV…AERE and KKEE…EEDE. A compositionally biased stretch (basic and acidic residues) spans 15 to 60; it reads DMGKMLGGDEEKDPDAAKKEEERQEALRQAEEERKAKYAKMEAERE. Positions 29–64 form a coiled coil; it reads DAAKKEEERQEALRQAEEERKAKYAKMEAEREVMRQ. Positions 48–70 are interaction with the SNARE complex; it reads RKAKYAKMEAEREVMRQGIRDKY.

It belongs to the complexin/synaphin family. In terms of assembly, binds to the SNARE core complex containing SNAP25, VAMP2 and STX1A. Nervous system, and pancreatic islet cells. Present in many brain regions, including hippocampus and cerebellum. In the retina, present at conventional amacrine cell synapses (at protein level).

The protein localises to the cytoplasm. Its subcellular location is the cytosol. The protein resides in the perikaryon. It localises to the presynapse. Its function is as follows. Positively regulates a late step in exocytosis of various cytoplasmic vesicles, such as synaptic vesicles and other secretory vesicles. Organizes the SNAREs into a cross-linked zigzag topology that, when interposed between the vesicle and plasma membranes, is incompatible with fusion, thereby preventing SNAREs from releasing neurotransmitters until an action potential arrives at the synapse. Also involved in glucose-induced secretion of insulin by pancreatic beta-cells. Essential for motor behavior. The chain is Complexin-1 (Cplx1) from Mus musculus (Mouse).